A 395-amino-acid polypeptide reads, in one-letter code: Chaperone protein DnaJ (395 aa).

The 66-residue stretch at 4 to 69 (DYYEVLGVGR…DKRRRYDQFG (66 aa)) folds into the J domain. The CR-type zinc finger occupies 152–233 (GVEKTLKIKK…CHGEGIKQGE (82 aa)). Zn(2+) is bound by residues cysteine 165, cysteine 168, cysteine 181, cysteine 184, cysteine 207, cysteine 210, cysteine 221, and cysteine 224. 4 CXXCXGXG motif repeats span residues 165–172 (CDVCNGTG), 181–188 (CPTCQGTG), 207–214 (CPTCGGEG), and 221–228 (CTACHGEG).

Belongs to the DnaJ family. Homodimer. Zn(2+) serves as cofactor.

It is found in the cytoplasm. In terms of biological role, participates actively in the response to hyperosmotic and heat shock by preventing the aggregation of stress-denatured proteins and by disaggregating proteins, also in an autonomous, DnaK-independent fashion. Unfolded proteins bind initially to DnaJ; upon interaction with the DnaJ-bound protein, DnaK hydrolyzes its bound ATP, resulting in the formation of a stable complex. GrpE releases ADP from DnaK; ATP binding to DnaK triggers the release of the substrate protein, thus completing the reaction cycle. Several rounds of ATP-dependent interactions between DnaJ, DnaK and GrpE are required for fully efficient folding. Also involved, together with DnaK and GrpE, in the DNA replication of plasmids through activation of initiation proteins. The polypeptide is Chaperone protein DnaJ (Prosthecochloris aestuarii (strain DSM 271 / SK 413)).